The following is a 448-amino-acid chain: Probable glycine dehydrogenase (decarboxylating) subunit 1 (448 aa).

This sequence belongs to the GcvP family. N-terminal subunit subfamily. In terms of assembly, the glycine cleavage system is composed of four proteins: P, T, L and H. In this organism, the P 'protein' is a heterodimer of two subunits.

The enzyme catalyses N(6)-[(R)-lipoyl]-L-lysyl-[glycine-cleavage complex H protein] + glycine + H(+) = N(6)-[(R)-S(8)-aminomethyldihydrolipoyl]-L-lysyl-[glycine-cleavage complex H protein] + CO2. In terms of biological role, the glycine cleavage system catalyzes the degradation of glycine. The P protein binds the alpha-amino group of glycine through its pyridoxal phosphate cofactor; CO(2) is released and the remaining methylamine moiety is then transferred to the lipoamide cofactor of the H protein. This Staphylococcus epidermidis (strain ATCC 35984 / DSM 28319 / BCRC 17069 / CCUG 31568 / BM 3577 / RP62A) protein is Probable glycine dehydrogenase (decarboxylating) subunit 1.